Here is a 298-residue protein sequence, read N- to C-terminus: Inosose dehydratase 1 (298 aa).

The protein belongs to the IolE/MocC family. The cofactor is glutathione. Co(2+) serves as cofactor. Requires Mn(2+) as cofactor.

The enzyme catalyses scyllo-inosose = 3D-3,5/4-trihydroxycyclohexane-1,2-dione + H2O. The protein operates within polyol metabolism; myo-inositol degradation into acetyl-CoA; acetyl-CoA from myo-inositol: step 2/7. In terms of biological role, catalyzes the dehydration of inosose (2-keto-myo-inositol, 2KMI or 2,4,6/3,5-pentahydroxycyclohexanone) to 3D-(3,5/4)-trihydroxycyclohexane-1,2-dione (D-2,3-diketo-4-deoxy-epi-inositol). The chain is Inosose dehydratase 1 from Bacillus cereus (strain ZK / E33L).